The following is a 446-amino-acid chain: MKLPLLRPLWPMLSPAAGSPDSPPEPSKPSLPAAWLLLHALFCATSMAVGFRFSRLIVYLLFLPTPINPTAHLVSLVSPPVMLAAANATTTITTTTTTTTTTVTTTTVAAEVGAHPQHHHHGPVFVGRHPIRVRPWPHPDPNELLKAHHILAAVQNAQRSSRRRGAGPPRPVIAVTPTTTSALQVPSLTSMAHTLRLVDGPLTWIVVEPEHHTDAVAAVLSRSNLNFLHITGPDSSTSRLRMHALREIRKRKMDGVVVFADENSILRTELFDEAQKVKSVGAVPVGVLGEDEGTSETFLQAPSCDAEGKLVGYHVSEETMLPANRGDMLLSSRLEWAGFVVNAQALWEGGGAASRPEWVSDIDAIDDGAAASPLSLVTDAARVEPLASCGQAALAWSHRSDALHEVKFPHEWKIDPPLVTIASRQQDAKPETPLKRTTLLNTEGQH.

Residues 1-30 (MKLPLLRPLWPMLSPAAGSPDSPPEPSKPS) are Cytoplasmic-facing. Residues 31–51 (LPAAWLLLHALFCATSMAVGF) traverse the membrane as a helical; Signal-anchor for type II membrane protein segment. Residues 52-446 (RFSRLIVYLL…TTLLNTEGQH (395 aa)) lie on the Lumenal side of the membrane. N-linked (GlcNAc...) asparagine glycosylation occurs at asparagine 87. The tract at residues 425 to 446 (QQDAKPETPLKRTTLLNTEGQH) is disordered.

This sequence belongs to the glycosyltransferase 43 family.

It localises to the golgi apparatus membrane. Functionally, involved in the synthesis of glucuronoxylan hemicellulose in secondary cell walls. This Oryza sativa subsp. japonica (Rice) protein is Probable glucuronosyltransferase Os04g0650300.